Here is a 1269-residue protein sequence, read N- to C-terminus: SLDTTGNVDLTSANVKAGSLDLNAGNKLILDTATQTTHQVSRDGATSDKTTLGPAANLNVAGDASIKTGGDFQQNAGNLNVGGNLNANIGGNWNLGVQQTGEHKVVQRANGVSDTDLNSATGSTVNVGGKSAIGVGGDLTAQGARLDFGQGGTVAAKGNVTFGAASTTSTINANSSGDQGNRSYAETRHGADQALTGTTVKGGDTLNVVSGKDINVIGSTIDLKKGDANLLAAGDVNVGAATETHVYNSRETHSRSGVVSGTKIASSQDATSTVANGSLISADGVSIGSGKDINVQGSTVVGTHDVALNAAHDVNITTSQDTSQSSTTYQEQHSGLMSGGGLSFSVGNSKLAQQNQSSSVTNNASTVGSVDGNLTVNAGNTLHVKGSDLVAGKDVTGTATNIVVDSATDTTHQAQQQQTSKSGLTVGLSGSVGDAINNAISETQAARESAKDSNGRASALHSIAAAGDVAFGGLGAKALLDGAKGPQAPSIGVQVSVGSSHSSMQSSEDQTIQRGSSINAGGNAKLIATGNGTPKDGNITIAGSNVNAANVALVANNQVNLVNTTDTDKTQSSNSSSGSSVGVSIGTNGIGVSASMQRAHGDGNSDAAIQNNTHINASQTATIVSGGDTNVIGANVNANKVVADVGGNLNVASVQDTTVSAAHQSSAGGGFTISQTGGGASFSAQNGHADGNYAGVKEQAGIQAGSGGFDVTVKGNTDLKGAYIGSTADASKNSLTTGTLTTSDIENHSHYSANSAGFSAGASVGVSTKAVGPSSVSGSGGVTPMVFQNDSGDQSATTKSAVSAGTINITKPGEQTQDVANLNRDTTNLNGTVSKTPDVQKMLSQQADTMNAAQAAGQTVSQAIGLYADYKRDAALDAADKAYKAGDLAGAQAALNEAKGWMEGGASRAELQMGGGALIGGLGGGSALTAIGGAAGAGTSSLLANQAEKISKSVGDTTGSSLVGNIAANVAATVGGALVGGSAGAAMASNVQLYNAGNDSNNQTSNDVFASLSKKVAQAIAMTADGKAGVWNGMVNVAGVIVNLPNGGPFASPGDPGYVSLDGLKKPYKSGTSIGPDAEFWTPVLATLGLGGKAAAGTGATTTSADAATVGNGALKTASGDLSAAGNAARTQPYGNGASASPSPGTATAGSSGANAQLPTANGGVAAAGTSSATNVGKVVIDGKIGGQLEARGWTQQEVQAVVNEGPVGTTMDNRSAGKTPDGLPRNDSASVYGSKSGYVVVNDRTGEVVQVSGKNDPVWIPDSRIKWK.

Residues 1 to 251 (SLDTTGNVDL…TETHVYNSRE (251 aa)) form an FHA-2 region. The segment at 252–991 (THSRSGVVSG…SAGAAMASNV (740 aa)) is pretoxin (PT) domain. Composition is skewed to low complexity over residues 317–336 (TTSQ…HSGL) and 491–507 (IGVQ…MQSS). 2 disordered regions span residues 317–340 (TTSQ…MSGG) and 491–518 (IGVQ…GSSI). Residues 508-518 (EDQTIQRGSSI) show a composition bias toward polar residues. The segment at 981-1269 (GSAGAAMASN…WIPDSRIKWK (289 aa)) is CT domain, has tRNA nuclease activity. The ELYN CT motif motif lies at 992–995 (QLYN). 2 disordered regions span residues 1124–1155 (AAGN…SGAN) and 1207–1231 (PVGT…DSAS). Residues 1135-1155 (GNGASASPSPGTATAGSSGAN) are compositionally biased toward low complexity.

This sequence belongs to the CdiA toxin family. As to quaternary structure, specifically interacts with cognate immunity protein CdiI, which blocks its tRNA nuclease activity.

The protein resides in the target cell. The protein localises to the target cell cytoplasm. Toxic component of a toxin-immunity protein module, which functions as a cellular contact-dependent growth inhibition (CDI) system. CDI modules allow bacteria to communicate with and inhibit the growth of closely related neighboring bacteria in a contact-dependent fashion. The C-terminal 282 residues (CT domain) acts as a tRNA endonuclease on some (tRNA1(Tyr), tRNA(Asn), tRNA(His)), but not all E.coli tRNAs, and inhibits growth in E.coli. Toxic activity is neutralized by coexpression of the cognate immunity protein CdiI in E.coli, but not by non-cognate immunity proteins from other strains of B.pseudomallei. Its function is as follows. The CdiA protein is thought to be exported from the cell through the central lumen of CdiB, the other half of its two-partner system (TPS). The TPS domain probably remains associated with CdiB while the FHA-1 domain forms an extended filament with the receptor-binding domain (RBD) at its extremity; in the secretion arrested state the C-terminus of the RBD domain form a hairpin-like structure as the FHA-2, PT and CT domains are periplasmic. Upon binding to a target cell outer membrane receptor a signal is transmitted to activate secretion. The filament elongates slightly, the rest of CdiA is secreted and the FHA-2 domain becomes stably associated with the target cell's outer membrane where it facilitates entry of the toxic CT domain into the target cell periplasm. From there the toxic CT domain is cleaved and gains access to the target cell cytoplasm via an inner membrane protein. In Burkholderia pseudomallei (Pseudomonas pseudomallei), this protein is tRNA nuclease CdiA (cdiA).